The primary structure comprises 359 residues: Peptide chain release factor 1 (359 aa).

N5-methylglutamine is present on Gln-235. The disordered stretch occupies residues 283 to 309; sequence QKAESERSQARRSQVGSGDRSERIRTY.

Belongs to the prokaryotic/mitochondrial release factor family. In terms of processing, methylated by PrmC. Methylation increases the termination efficiency of RF1.

Its subcellular location is the cytoplasm. Peptide chain release factor 1 directs the termination of translation in response to the peptide chain termination codons UAG and UAA. The sequence is that of Peptide chain release factor 1 from Brucella canis (strain ATCC 23365 / NCTC 10854 / RM-666).